Reading from the N-terminus, the 364-residue chain is DNA replication and repair protein RecF (364 aa).

30-37 (GNNAQGKT) lines the ATP pocket.

Belongs to the RecF family.

Its subcellular location is the cytoplasm. The RecF protein is involved in DNA metabolism; it is required for DNA replication and normal SOS inducibility. RecF binds preferentially to single-stranded, linear DNA. It also seems to bind ATP. This Clostridium botulinum (strain Langeland / NCTC 10281 / Type F) protein is DNA replication and repair protein RecF.